Reading from the N-terminus, the 550-residue chain is Homeobox and leucine zipper protein Homez (550 aa).

Residues 1–10 are compositionally biased toward pro residues; it reads MVRGWEPPPG. Residues 1-36 form a disordered region; the sequence is MVRGWEPPPGLDCAISEGHKSEGTMPPNKEASGLSS. The homeobox 1 DNA-binding region spans 55–114; sequence WTQAAQTSELDSNEHLLKTFSYFPYPSLADIALLCLRYGLQMEKVKTWFMAQRLRCGISW. Residues 168-199 form a disordered region; sequence GPPTLSKPTQTKGLKVEPEEPSQMPPLPQSHQ. Glycyl lysine isopeptide (Lys-Gly) (interchain with G-Cter in SUMO2) cross-links involve residues lysine 182, lysine 200, and lysine 202. Residues 223-265 form a disordered region; the sequence is LQSSGLSKEQAGRGPNQSHGIGTASWNHSTTVPQPQARDKPPP. A compositionally biased stretch (polar residues) spans 237-256; that stretch reads PNQSHGIGTASWNHSTTVPQ. Position 351 is a phosphoserine (serine 351). DNA-binding regions (homeobox) lie at residues 355-415 and 451-510; these read QRQR…KHGQ and TPPL…AEVV. The short motif at 358–363 is the Nuclear localization signal element; the sequence is RKTKRK. Disordered stretches follow at residues 424 to 465 and 512 to 550; these read VPGA…DIQP and CLDEEEEEEEEELPEDDEEEEEEEEEDDDDDDDDVIIQD. Position 451 is a phosphothreonine (threonine 451). The span at 452 to 463 shows a compositional bias: pro residues; the sequence is PPLPIPPPPPDI. Positions 513-550 are enriched in acidic residues; it reads LDEEEEEEEEELPEDDEEEEEEEEEDDDDDDDDVIIQD.

As to quaternary structure, homodimer or heterodimer (Potential). Interacts with HOXC8. In terms of tissue distribution, ubiquitous. Strongly expressed in adult testis and kidney as well as fetal lung and kidney.

It localises to the nucleus. May function as a transcriptional regulator. The polypeptide is Homeobox and leucine zipper protein Homez (HOMEZ) (Homo sapiens (Human)).